The sequence spans 415 residues: Serine hydroxymethyltransferase (415 aa).

(6S)-5,6,7,8-tetrahydrofolate is bound by residues Leu122 and 126 to 128 (GHL). The residue at position 230 (Lys230) is an N6-(pyridoxal phosphate)lysine.

It belongs to the SHMT family. In terms of assembly, homodimer. Requires pyridoxal 5'-phosphate as cofactor.

It localises to the cytoplasm. It catalyses the reaction (6R)-5,10-methylene-5,6,7,8-tetrahydrofolate + glycine + H2O = (6S)-5,6,7,8-tetrahydrofolate + L-serine. It functions in the pathway one-carbon metabolism; tetrahydrofolate interconversion. It participates in amino-acid biosynthesis; glycine biosynthesis; glycine from L-serine: step 1/1. Functionally, catalyzes the reversible interconversion of serine and glycine with tetrahydrofolate (THF) serving as the one-carbon carrier. This reaction serves as the major source of one-carbon groups required for the biosynthesis of purines, thymidylate, methionine, and other important biomolecules. Also exhibits THF-independent aldolase activity toward beta-hydroxyamino acids, producing glycine and aldehydes, via a retro-aldol mechanism. The sequence is that of Serine hydroxymethyltransferase from Ralstonia pickettii (strain 12J).